The primary structure comprises 240 residues: SURF1-like protein (240 aa).

2 helical membrane-spanning segments follow: residues 7–23 and 201–219; these read VFITFTILISLGFWQLS and YALTWFGLAISLIVIYVIY.

The protein belongs to the SURF1 family.

It is found in the cell membrane. The protein is SURF1-like protein of Rickettsia conorii (strain ATCC VR-613 / Malish 7).